Reading from the N-terminus, the 275-residue chain is Dermonecrotic toxin LhSicTox-alphaIV2 (275 aa).

The active site involves His5. 2 residues coordinate Mg(2+): Glu25 and Asp27. Catalysis depends on His41, which acts as the Nucleophile. 2 disulfides stabilise this stretch: Cys45-Cys51 and Cys47-Cys192. Asp85 contributes to the Mg(2+) binding site.

Belongs to the arthropod phospholipase D family. Class II subfamily. The cofactor is Mg(2+). Expressed by the venom gland.

It is found in the secreted. The enzyme catalyses an N-(acyl)-sphingosylphosphocholine = an N-(acyl)-sphingosyl-1,3-cyclic phosphate + choline. It catalyses the reaction an N-(acyl)-sphingosylphosphoethanolamine = an N-(acyl)-sphingosyl-1,3-cyclic phosphate + ethanolamine. The catalysed reaction is a 1-acyl-sn-glycero-3-phosphocholine = a 1-acyl-sn-glycero-2,3-cyclic phosphate + choline. It carries out the reaction a 1-acyl-sn-glycero-3-phosphoethanolamine = a 1-acyl-sn-glycero-2,3-cyclic phosphate + ethanolamine. Dermonecrotic toxins cleave the phosphodiester linkage between the phosphate and headgroup of certain phospholipids (sphingolipid and lysolipid substrates), forming an alcohol (often choline) and a cyclic phosphate. This toxin acts on sphingomyelin (SM). It may also act on ceramide phosphoethanolamine (CPE), lysophosphatidylcholine (LPC) and lysophosphatidylethanolamine (LPE), but not on lysophosphatidylserine (LPS), and lysophosphatidylglycerol (LPG). It acts by transphosphatidylation, releasing exclusively cyclic phosphate products as second products. Induces dermonecrosis, hemolysis, increased vascular permeability, edema, inflammatory response, and platelet aggregation. The sequence is that of Dermonecrotic toxin LhSicTox-alphaIV2 from Loxosceles hirsuta (Recluse spider).